The sequence spans 513 residues: GMP synthase [glutamine-hydrolyzing] (513 aa).

The 198-residue stretch at 3–200 (SVLVLDFGSQ…LITIAGITPD (198 aa)) folds into the Glutamine amidotransferase type-1 domain. Cys-80 (nucleophile) is an active-site residue. Active-site residues include His-174 and Glu-176. Residues 201–388 (WSSKSFIEHQ…LGIAEDILMR (188 aa)) form the GMPS ATP-PPase domain. Residue 228–234 (SGGVDST) coordinates ATP.

In terms of assembly, homodimer.

It catalyses the reaction XMP + L-glutamine + ATP + H2O = GMP + L-glutamate + AMP + diphosphate + 2 H(+). Its pathway is purine metabolism; GMP biosynthesis; GMP from XMP (L-Gln route): step 1/1. In terms of biological role, catalyzes the synthesis of GMP from XMP. In Pelodictyon phaeoclathratiforme (strain DSM 5477 / BU-1), this protein is GMP synthase [glutamine-hydrolyzing].